Reading from the N-terminus, the 153-residue chain is Cystatin-9 (153 aa).

The first 27 residues, 1–27 (MGRQRRCRWAQPWTLLLLLLGPRLLVT), serve as a signal peptide directing secretion.

This sequence belongs to the cystatin family.

It is found in the secreted. Its function is as follows. May play a role in hematopoietic differentiation or inflammation. The sequence is that of Cystatin-9 (CST9) from Bos taurus (Bovine).